Here is a 232-residue protein sequence, read N- to C-terminus: E3 ubiquitin-protein ligase RNF125 (232 aa).

Over residues 1 to 10 the composition is skewed to polar residues; the sequence is MGSVLSTDSG. Residues 1–23 form a disordered region; it reads MGSVLSTDSGKSAPASATARALE. The N-myristoyl glycine moiety is linked to residue G2. 2 residues coordinate Zn(2+): C37 and C40. The RING-type zinc finger occupies 37 to 76; that stretch reads CAVCLEVLHQPVRTRCGHVFCRSCIATSLKNNKWTCPYCR. Residues 43 to 45 form an interaction with the C2HC RNF-type zinc finger region; sequence VLH. Residues C52, H54, C57, C60, C72, C75, C100, and C103 each coordinate Zn(2+). The C2HC RNF-type zinc-finger motif lies at 100–119; it reads CAECDTLVCLSEMRAHIRTC. Residues 109–113 form an interaction with the RING-type zinc finger region; it reads LSEMR. Zn(2+)-binding residues include H115 and C119. The tract at residues 120 to 128 is linker region; the sequence is QKYIDKYGP. The required for interaction with ubiquitin and for autoubiquitination stretch occupies residues 210–224; sequence EEALIRRVLDRSLLE.

In terms of assembly, interacts with UBE2D1. Interacts with VCP/p97; leading to recruit RNF125 to RIGI and promote ubiquitination of RIGI. Post-translationally, autoubiquitinated, leading to its subsequent proteasomal degradation. As to expression, predominantly expressed in lymphoid tissues, including bone marrow, spleen and thymus. Also weakly expressed in other tissues. Predominant in the CD4(+) and CD8(+) T-cells, suggesting that it is preferentially confined to T-cells.

It localises to the golgi apparatus membrane. It carries out the reaction S-ubiquitinyl-[E2 ubiquitin-conjugating enzyme]-L-cysteine + [acceptor protein]-L-lysine = [E2 ubiquitin-conjugating enzyme]-L-cysteine + N(6)-ubiquitinyl-[acceptor protein]-L-lysine.. The protein operates within protein modification; protein ubiquitination. In terms of biological role, E3 ubiquitin-protein ligase that mediates ubiquitination and subsequent proteasomal degradation of target proteins, such as RIGI, MAVS/IPS1, IFIH1/MDA5, JAK1 and p53/TP53. Acts as a negative regulator of type I interferon production by mediating ubiquitination of RIGI at 'Lys-181', leading to RIGI degradation. Mediates ubiquitination and subsequent degradation of p53/TP53. Mediates ubiquitination and subsequent degradation of JAK1. Acts as a positive regulator of T-cell activation. This Homo sapiens (Human) protein is E3 ubiquitin-protein ligase RNF125.